The sequence spans 342 residues: L-threonine 3-dehydrogenase (342 aa).

Cys-38 is a Zn(2+) binding site. Active-site charge relay system residues include Thr-40 and His-43. His-63, Glu-64, Cys-93, Cys-96, Cys-99, and Cys-107 together coordinate Zn(2+). NAD(+)-binding positions include Ile-175, Asp-195, Arg-200, 262–264, and 286–287; these read LGI and IY.

It belongs to the zinc-containing alcohol dehydrogenase family. In terms of assembly, homotetramer. Requires Zn(2+) as cofactor.

The protein resides in the cytoplasm. It carries out the reaction L-threonine + NAD(+) = (2S)-2-amino-3-oxobutanoate + NADH + H(+). Its pathway is amino-acid degradation; L-threonine degradation via oxydo-reductase pathway; glycine from L-threonine: step 1/2. Catalyzes the NAD(+)-dependent oxidation of L-threonine to 2-amino-3-ketobutyrate. The protein is L-threonine 3-dehydrogenase of Paraburkholderia phymatum (strain DSM 17167 / CIP 108236 / LMG 21445 / STM815) (Burkholderia phymatum).